Reading from the N-terminus, the 270-residue chain is Formamidopyrimidine-DNA glycosylase (270 aa).

The Schiff-base intermediate with DNA role is filled by Pro2. Glu3 acts as the Proton donor in catalysis. Lys58 acts as the Proton donor; for beta-elimination activity in catalysis. 3 residues coordinate DNA: His91, Arg110, and Arg151. An FPG-type zinc finger spans residues 236 to 270; it reads FVYGRGGQPCKVCGTELREVKLGQRASVFCPKCQR. Arg260 functions as the Proton donor; for delta-elimination activity in the catalytic mechanism.

This sequence belongs to the FPG family. As to quaternary structure, monomer. Zn(2+) is required as a cofactor.

The enzyme catalyses Hydrolysis of DNA containing ring-opened 7-methylguanine residues, releasing 2,6-diamino-4-hydroxy-5-(N-methyl)formamidopyrimidine.. The catalysed reaction is 2'-deoxyribonucleotide-(2'-deoxyribose 5'-phosphate)-2'-deoxyribonucleotide-DNA = a 3'-end 2'-deoxyribonucleotide-(2,3-dehydro-2,3-deoxyribose 5'-phosphate)-DNA + a 5'-end 5'-phospho-2'-deoxyribonucleoside-DNA + H(+). Its function is as follows. Involved in base excision repair of DNA damaged by oxidation or by mutagenic agents. Acts as a DNA glycosylase that recognizes and removes damaged bases. Has a preference for oxidized purines, such as 7,8-dihydro-8-oxoguanine (8-oxoG). Has AP (apurinic/apyrimidinic) lyase activity and introduces nicks in the DNA strand. Cleaves the DNA backbone by beta-delta elimination to generate a single-strand break at the site of the removed base with both 3'- and 5'-phosphates. This Pseudomonas entomophila (strain L48) protein is Formamidopyrimidine-DNA glycosylase.